We begin with the raw amino-acid sequence, 348 residues long: RNA 3'-terminal phosphate cyclase (348 aa).

Residues Q102 and 285 to 288 (HMGD) each bind ATP. The active-site Tele-AMP-histidine intermediate is H311.

The protein belongs to the RNA 3'-terminal cyclase family. Type 1 subfamily.

It localises to the cytoplasm. The enzyme catalyses a 3'-end 3'-phospho-ribonucleotide-RNA + ATP = a 3'-end 2',3'-cyclophospho-ribonucleotide-RNA + AMP + diphosphate. In terms of biological role, catalyzes the conversion of 3'-phosphate to a 2',3'-cyclic phosphodiester at the end of RNA. The mechanism of action of the enzyme occurs in 3 steps: (A) adenylation of the enzyme by ATP; (B) transfer of adenylate to an RNA-N3'P to produce RNA-N3'PP5'A; (C) and attack of the adjacent 2'-hydroxyl on the 3'-phosphorus in the diester linkage to produce the cyclic end product. The biological role of this enzyme is unknown but it is likely to function in some aspects of cellular RNA processing. This chain is RNA 3'-terminal phosphate cyclase, found in Korarchaeum cryptofilum (strain OPF8).